Reading from the N-terminus, the 559-residue chain is uncharacterized protein (559 aa).

Disordered stretches follow at residues 315 to 360 and 454 to 559; these read TDDA…ERDI and DKID…STEN. Over residues 320 to 329 the composition is skewed to polar residues; sequence NENSDNSMNT. The segment covering 348–357 has biased composition (acidic residues); it reads DNNDDSDDSE. Residues 433–495 are a coiled coil; that stretch reads ELKIQEMEKI…KRRQKRSQRS (63 aa). Over residues 454 to 501 the composition is skewed to basic and acidic residues; sequence DKIDMDQIKSEMSRRRDESNKRRDEKRKDREEKRRQKRSQRSDTRKQG. A compositionally biased stretch (low complexity) spans 507 to 527; the sequence is SDEATSDQTQSTDSNNTTQTA.

Its subcellular location is the virion. This is an uncharacterized protein from Acanthamoeba polyphaga mimivirus (APMV).